A 206-amino-acid chain; its full sequence is Phosphatidyl-N-methylethanolamine N-methyltransferase (206 aa).

Over 1-20 the chain is Lumenal; the sequence is MKESVQEIIQQLIHSVDLQS. Residues 21-41 constitute an intramembrane region (helical); it reads SKFQLAIVCTMFNPIFWNIVA. Residues 42-53 are Lumenal-facing; it reads RMEYHKHSLTKM. Residues 54–74 traverse the membrane as a helical segment; that stretch reads CGGARKGCYMLAATIFSLGIV. The Cytoplasmic segment spans residues 75-101; it reads RDMVYESALREQPTCSLITGENWTKLG. The helical transmembrane segment at 102-122 threads the bilayer; sequence VALFGLGQVLVLSSMYKLGIT. 106-108 contributes to the S-adenosyl-L-methionine binding site; the sequence is GLG. Residues 123-165 are Lumenal-facing; the sequence is GTYLGDYFGILMDERVTGFPFNVSNNPMYQGSTLSFLGIALYK. Residues 166-186 form a helical membrane-spanning segment; sequence GKPAGLVVSAVVYFMYKIALR. Residues 187 to 206 lie on the Cytoplasmic side of the membrane; that stretch reads WEEPFTAMIYANRDKAKKNM. S-adenosyl-L-methionine is bound at residue 188-189; that stretch reads EE.

This sequence belongs to the class VI-like SAM-binding methyltransferase superfamily. PEMT/PEM2 methyltransferase family.

The protein localises to the endoplasmic reticulum membrane. The protein resides in the mitochondrion membrane. The catalysed reaction is a 1,2-diacyl-sn-glycero-3-phosphoethanolamine + S-adenosyl-L-methionine = a 1,2-diacyl-sn-glycero-3-phospho-N-methylethanolamine + S-adenosyl-L-homocysteine + H(+). It carries out the reaction a 1,2-diacyl-sn-glycero-3-phospho-N-methylethanolamine + S-adenosyl-L-methionine = a 1,2-diacyl-sn-glycero-3-phospho-N,N-dimethylethanolamine + S-adenosyl-L-homocysteine + H(+). It catalyses the reaction a 1,2-diacyl-sn-glycero-3-phospho-N,N-dimethylethanolamine + S-adenosyl-L-methionine = a 1,2-diacyl-sn-glycero-3-phosphocholine + S-adenosyl-L-homocysteine + H(+). Its pathway is phospholipid metabolism; phosphatidylcholine biosynthesis. In terms of biological role, catalyzes the second two steps of the methylation pathway of phosphatidylcholine biosynthesis, the SAM-dependent methylation of phosphatidylmonomethylethanolamine (PMME) to phosphatidyldimethylethanolamine (PDME) and of PDME to phosphatidylcholine (PC). Can also catalyze the first methylation reaction of PE to PMME in the absence of PE methyltransferase CHO2. The sequence is that of Phosphatidyl-N-methylethanolamine N-methyltransferase from Saccharomyces cerevisiae (strain ATCC 204508 / S288c) (Baker's yeast).